We begin with the raw amino-acid sequence, 69 residues long: Large ribosomal subunit protein eL38 (69 aa).

Belongs to the eukaryotic ribosomal protein eL38 family.

The chain is Large ribosomal subunit protein eL38 (RPL38) from Solanum lycopersicum (Tomato).